Here is a 121-residue protein sequence, read N- to C-terminus: Large ribosomal subunit protein uL18 (121 aa).

It belongs to the universal ribosomal protein uL18 family. Part of the 50S ribosomal subunit; part of the 5S rRNA/L5/L18/L25 subcomplex. Contacts the 5S and 23S rRNAs.

Its function is as follows. This is one of the proteins that bind and probably mediate the attachment of the 5S RNA into the large ribosomal subunit, where it forms part of the central protuberance. The polypeptide is Large ribosomal subunit protein uL18 (Albidiferax ferrireducens (strain ATCC BAA-621 / DSM 15236 / T118) (Rhodoferax ferrireducens)).